The sequence spans 388 residues: Ribonuclease D (388 aa).

Residues 7–173 (ITDSKTLAQF…QIFPKMLEEL (167 aa)) enclose the 3'-5' exonuclease domain. The HRDC domain maps to 212-293 (KADVLGRLKA…ASHAPLAKEE (82 aa)).

The protein belongs to the RNase D family. A divalent metal cation is required as a cofactor.

Its subcellular location is the cytoplasm. It catalyses the reaction Exonucleolytic cleavage that removes extra residues from the 3'-terminus of tRNA to produce 5'-mononucleotides.. Functionally, exonuclease involved in the 3' processing of various precursor tRNAs. Initiates hydrolysis at the 3'-terminus of an RNA molecule and releases 5'-mononucleotides. The protein is Ribonuclease D of Sphingobium indicum (strain DSM 16413 / CCM 7287 / MTCC 6362 / UT26 / NBRC 101211 / UT26S) (Sphingobium japonicum).